A 2155-amino-acid polypeptide reads, in one-letter code: Conidial pigment polyketide synthase PfmaE (2155 aa).

The N-terminal acylcarrier protein transacylase domain (SAT) stretch occupies residues 8–245 (LLFGDQSLDT…TAIPVYGPYH (238 aa)). Residues 381-813 (KCKLAIVGMA…GGNTGLLLED (433 aa)) form the Ketosynthase family 3 (KS3) domain. Residues cysteine 553, histidine 688, and histidine 731 each act as for beta-ketoacyl synthase activity in the active site. Residues 910-1231 (AFMFTGQGSH…LCTLHSAGLN (322 aa)) are malonyl-CoA:ACP transacylase (MAT) domain. The active-site For acyl/malonyl transferase activity is the serine 1001. The product template (PT) domain stretch occupies residues 1293-1608 (TTTVQKVVRE…PRKVLNVVLP (316 aa)). Residues 1297–1428 (QKVVREEVKG…CKVFFGDNEE (132 aa)) are N-terminal hotdog fold. One can recognise a PKS/mFAS DH domain in the interval 1297-1604 (QKVVREEVKG…FQAIPRKVLN (308 aa)). Histidine 1329 functions as the Proton acceptor; for dehydratase activity in the catalytic mechanism. Residues 1455 to 1604 (DASKIGRGLA…FQAIPRKVLN (150 aa)) form a C-terminal hotdog fold region. The active-site Proton donor; for dehydratase activity is aspartate 1516. 2 consecutive Carrier domains span residues 1653–1730 (LTKN…AQFE) and 1779–1856 (GNVS…GIED). Serine 1690 is subject to O-(pantetheine 4'-phosphoryl)serine. The disordered stretch occupies residues 1738 to 1782 (EENAHSSASSDSADMETESNFTTPSDDSEKDEVKGDAPAADGNVS). The residue at position 1816 (serine 1816) is an O-(pantetheine 4'-phosphoryl)serine. The interval 1855-1892 (EDKPKRAAPKSAKQEPAKPEPKVQGEAKAHTNPVDNYP) is disordered. Residues 1866 to 1883 (AKQEPAKPEPKVQGEAKA) show a composition bias toward basic and acidic residues. The thioesterase (TE) domain stretch occupies residues 1911–2041 (QLFMIPDGSG…LGEGDDAEAK (131 aa)).

The protein operates within pigment biosynthesis; melanin biosynthesis. Non-reducing polyketide synthase; part of the gene cluster that mediates the biosynthesis of dihydroxynaphthalene (DHN)-melanin, a bluish-green pigment forming a dark layer in the conidial wall that protects the conidia from UV radiations. The first step of the pathway is the production of the pentaketide 1,3,6,8-tetrahydroxynaphthalene (1,3,6,8-THN or T4HN) by the polyketide synthase PfmaE though condensation of acetyl-CoA with malonyl-CoA. T4HN is not stable and easily oxidizes into the stable form flaviolin. T4HN is also substrate of the hydroxynaphthalene reductase PfmaG to yield scytalone. The scytalone dehydratase PfmaJ then reduces scytalone to 1,3,8-THN. 1,3,8-THN is then substrate of the hydroxynaphthalene reductase PfmaI to yield vermelone. Vermelone is further converted by the multicopper oxidase PfmaD to 1,8-DHN. Finally the laccase PFICI_06862 transforms 1,8-DHN to DHN-melanin. The roles of the 5-oxoprolinase PfmaA and the proline iminopeptidase PfmaB within the cluster have not been elucidated yet. In Pestalotiopsis fici (strain W106-1 / CGMCC3.15140), this protein is Conidial pigment polyketide synthase PfmaE.